Consider the following 106-residue polypeptide: UPF0145 protein CLL_A2504 (106 aa).

Belongs to the UPF0145 family.

This is UPF0145 protein CLL_A2504 from Clostridium botulinum (strain Eklund 17B / Type B).